The chain runs to 83 residues: MRKSFYSWLMTQRNPKSNAPVAILADLVFDDTTFPKHTNDFELISRYLEDQASFSFNLGQFDEIWEDYLAHQYVDKKESYRLF.

The protein belongs to the UPF0346 family.

This is UPF0346 protein M28_Spy0369 from Streptococcus pyogenes serotype M28 (strain MGAS6180).